The sequence spans 412 residues: MKIYLVGGAVRDALLGLPVKDRDWVVVGSTPQEMLDAGYQQVGRDFPVFLHPQTHEEYALARTERKSGSGYTGFTCYAAPDVTLEDDLKRRDLTINALAQDDNGEIIDPYNGLGDLQNRLLRHVSPAFGEDPLRVLRVARFAARYAHLGFRIADETLTLMREMTHEGELEHLTPERVWKETESALTTRNPQVFFQVLRDCGALRVLFPEIDALFGVPAPARWHPEIDTGIHTLMTLSMAAMLSPQVDVRFATLCHDLGKGLTPPELWPRHHGHGPAGVKLVEQLCQRLRVPNEIRDLARLVAEFHDLIHTFPMLNPKTIVKLFDSIDAWRKPQRVEQLALTSEADVRGRTGFESADYPQGRWLREAWEVAQSVPTKAVVEAGFKGVEIREELTRRRIAAVASWKEQRCPKPD.

Residues G8 and R11 each contribute to the ATP site. G8 and R11 together coordinate CTP. Mg(2+) contacts are provided by D21 and D23. ATP-binding residues include R91, R137, and R140. Positions 91, 137, and 140 each coordinate CTP. The HD domain occupies 228–329 (TGIHTLMTLS…VKLFDSIDAW (102 aa)).

It belongs to the tRNA nucleotidyltransferase/poly(A) polymerase family. Bacterial CCA-adding enzyme type 1 subfamily. In terms of assembly, monomer. Can also form homodimers and oligomers. It depends on Mg(2+) as a cofactor. The cofactor is Ni(2+).

It catalyses the reaction a tRNA precursor + 2 CTP + ATP = a tRNA with a 3' CCA end + 3 diphosphate. It carries out the reaction a tRNA with a 3' CCA end + 2 CTP + ATP = a tRNA with a 3' CCACCA end + 3 diphosphate. Catalyzes the addition and repair of the essential 3'-terminal CCA sequence in tRNAs without using a nucleic acid template. Adds these three nucleotides in the order of C, C, and A to the tRNA nucleotide-73, using CTP and ATP as substrates and producing inorganic pyrophosphate. tRNA 3'-terminal CCA addition is required both for tRNA processing and repair. Also involved in tRNA surveillance by mediating tandem CCA addition to generate a CCACCA at the 3' terminus of unstable tRNAs. While stable tRNAs receive only 3'-terminal CCA, unstable tRNAs are marked with CCACCA and rapidly degraded. In Escherichia coli (strain SE11), this protein is Multifunctional CCA protein.